The following is a 45-amino-acid chain: Pyruvate dehydrogenase E1 component (45 aa).

Homodimer. Thiamine diphosphate is required as a cofactor.

The enzyme catalyses N(6)-[(R)-lipoyl]-L-lysyl-[protein] + pyruvate + H(+) = N(6)-[(R)-S(8)-acetyldihydrolipoyl]-L-lysyl-[protein] + CO2. Its function is as follows. The pyruvate dehydrogenase complex catalyzes the overall conversion of pyruvate to acetyl-CoA and CO(2). It contains multiple copies of three enzymatic components: pyruvate dehydrogenase (E1), dihydrolipoamide acetyltransferase (E2) and lipoamide dehydrogenase (E3). In Azotobacter vinelandii, this protein is Pyruvate dehydrogenase E1 component.